The chain runs to 347 residues: Ribosomal RNA small subunit methyltransferase C (347 aa).

Belongs to the methyltransferase superfamily. RsmC family. As to quaternary structure, monomer.

It is found in the cytoplasm. It carries out the reaction guanosine(1207) in 16S rRNA + S-adenosyl-L-methionine = N(2)-methylguanosine(1207) in 16S rRNA + S-adenosyl-L-homocysteine + H(+). Its function is as follows. Specifically methylates the guanine in position 1207 of 16S rRNA in the 30S particle. The chain is Ribosomal RNA small subunit methyltransferase C from Shewanella baltica (strain OS155 / ATCC BAA-1091).